Here is a 101-residue protein sequence, read N- to C-terminus: UPF0235 protein CJA_0091 (101 aa).

The protein belongs to the UPF0235 family.

The sequence is that of UPF0235 protein CJA_0091 from Cellvibrio japonicus (strain Ueda107) (Pseudomonas fluorescens subsp. cellulosa).